The sequence spans 378 residues: Erythronate-4-phosphate dehydrogenase (378 aa).

Positions 45 and 66 each coordinate substrate. NAD(+) is bound by residues Asp146 and Thr175. Residue Arg208 is part of the active site. Residue Asp232 coordinates NAD(+). Glu237 is an active-site residue. The active-site Proton donor is the His254. Gly257 lines the NAD(+) pocket. Tyr258 contributes to the substrate binding site.

Belongs to the D-isomer specific 2-hydroxyacid dehydrogenase family. PdxB subfamily. As to quaternary structure, homodimer.

It localises to the cytoplasm. It carries out the reaction 4-phospho-D-erythronate + NAD(+) = (R)-3-hydroxy-2-oxo-4-phosphooxybutanoate + NADH + H(+). It functions in the pathway cofactor biosynthesis; pyridoxine 5'-phosphate biosynthesis; pyridoxine 5'-phosphate from D-erythrose 4-phosphate: step 2/5. Functionally, catalyzes the oxidation of erythronate-4-phosphate to 3-hydroxy-2-oxo-4-phosphonooxybutanoate. The sequence is that of Erythronate-4-phosphate dehydrogenase from Salmonella agona (strain SL483).